Here is a 727-residue protein sequence, read N- to C-terminus: MGRRAKMVEKVKSLMETHDQIRNMGICAHIDHGKTTLSDNLLAGAGMISKDLAGDQLALDFDEEEAARGITIYAANVSMVHEYNGKEYLINLIDTPGHVDFGGDVTRAMRAIDGAVVVCCAVEGVMPQTETVLRQALKEKVKPVLFINKVDRLINELKLTPEELQGRFMKIIAEVNKLIEKMAPEEFKKEWLCDVVTGKVAFGSAYNNWAISVPYMQKSGISFKDIIDYCEQEKQSELADKAPLHEVILDMAIKHLPNPLQAQKYRIPNIWKGDAESEVGKSMAMCDPNGPLAGVVTKIIVDKHAGSISACRLFSGRIKQGDELYLVGSKQKARAQQVAIFMGAERVQVPSISAGNICALTGLREATAGETVCSPSKILEPGFESLTHTSEPVITVAIEAKNTKDLPKLIEILRQIGREDNTVRIEINEETGEHLISGMGELHIEVITNTKIGRDGGIEVDVGEPIIVYRETITGTSPEIEGKSPNKHNKLYMIAEPMEESVYAAYVEGKIHDEDFKKKTNVDAETRLIEAGLEREQAKKVMSIYNGNMIVNMTKGIVQLDEARELIIEGFKEGVKGGPLASERAQGVKIKLIDATFHEDAIHRGPSQIIPAIRFGVRDAVSSAKPILLEPMQKIYINTPQDYMGDAIREINNRRGQIVDMEQEGDMAIIKGSVPVAEMFGFAGAIRGATQGRCLWSVEFSGFERVPNEIQTKVVAQIRDRKGLKSE.

Residues 19 to 260 form the tr-type G domain; it reads DQIRNMGICA…MAIKHLPNPL (242 aa). GTP contacts are provided by residues 28 to 35, 94 to 98, and 148 to 151; these read AHIDHGKT, DTPGH, and NKVD. Histidine 603 carries the post-translational modification Diphthamide.

The protein belongs to the TRAFAC class translation factor GTPase superfamily. Classic translation factor GTPase family. EF-G/EF-2 subfamily.

It is found in the cytoplasm. In terms of biological role, catalyzes the GTP-dependent ribosomal translocation step during translation elongation. During this step, the ribosome changes from the pre-translocational (PRE) to the post-translocational (POST) state as the newly formed A-site-bound peptidyl-tRNA and P-site-bound deacylated tRNA move to the P and E sites, respectively. Catalyzes the coordinated movement of the two tRNA molecules, the mRNA and conformational changes in the ribosome. In Methanococcus vannielii (strain ATCC 35089 / DSM 1224 / JCM 13029 / OCM 148 / SB), this protein is Elongation factor 2 (fusA).